Reading from the N-terminus, the 959-residue chain is Atromentin synthetase invA1 (959 aa).

The tract at residues 59–466 (DSSIQTKTFS…SGRIKETVIV (408 aa)) is adenylation (A) domain. The region spanning 598 to 676 (TPQTETEQTL…SLANYIVALK (79 aa)) is the Carrier domain. A thiolation and peptide carrier (T) domain region spans residues 603 to 673 (TEQTLAAIYA…VVSSLANYIV (71 aa)). O-(pantetheine 4'-phosphoryl)serine is present on serine 635. The tract at residues 699 to 946 (PIFMVHPGVG…LMDFDHVPGF (248 aa)) is thioesterase (TE) domain.

Belongs to the ATP-dependent AMP-binding enzyme family.

Its pathway is secondary metabolite biosynthesis. Its function is as follows. An L-tyrosine:2-oxoglutarate aminotransferase (probably invD) and atromentin synthetase invA1 catalyze consecutive steps to turn over L-tyrosine into atromentin, which represents the generic precursor molecule for the entire terphenylquinone and pulvinic acid family of pigments, which are widely distributed secondary metabolites in homobasidiomycetes. The first step catalyzed by the aminotransferase converts L-tyrosine in to 4-hydroxyphenylpyruvate (4-HPP). Adenylation of two 4-HPP monomers by the invA1 adenylation (A) domain, covalent tethering of the monomers as a thioester and oxoester onto the invA1 thiolation (T) and thioesterase (TE) domains, respectively, and symmetric C-C-bond formation between two monomers catalyzed by the invA1 TE domain leads to atromentin. This Paxillus involutus (Naked brimcap) protein is Atromentin synthetase invA1 (invA1).